The sequence spans 1020 residues: Vacuolar membrane protease (1020 aa).

Over 1 to 11 (MKCHNPFGFRV) the chain is Cytoplasmic. Residues 12–32 (GPVTFWTIIIYLALLVPLLWI) traverse the membrane as a helical segment. The Vacuolar portion of the chain corresponds to 33 to 410 (HETVPPAPSS…GFAVFGLRGL (378 aa)). N-linked (GlcNAc...) asparagine glycosylation is found at Asn50, Asn94, and Asn130. 2 residues coordinate Zn(2+): His191 and Asp203. Glu237 (proton acceptor) is an active-site residue. Residues Glu238, Glu263, and His336 each contribute to the Zn(2+) site. Residues 411–431 (FAWSLTLLIVSPLILAILVFI) traverse the membrane as a helical segment. At 432-467 (LNRHDKLYFFSRKINVHNEGSEDPVSIGGFRGFTRF) the chain is on the cytoplasmic side. A helical membrane pass occupies residues 468–488 (PIAVGFSGALTLASAFLLTKI). At 489 to 491 (NPM) the chain is on the vacuolar side. The helical transmembrane segment at 492 to 512 (IVYSSEYAVWGMMLSLFYVSL) threads the bilayer. Over 513–529 (WMTLKGSSAVRPSALQR) the chain is Cytoplasmic. Residues 530–550 (GYIHIWLFIVSWGLLIVVAVT) traverse the membrane as a helical segment. The Vacuolar portion of the chain corresponds to 551–561 (EDRLKIASGYP). A helical membrane pass occupies residues 562-582 (VVFLHSALFLSTVISFLELFG). The Cytoplasmic segment spans residues 583–690 (LTKKHDYARR…RLPGWTWILQ (108 aa)). The segment at 609 to 648 (DDALIAPDTPNDEAEDSDGEDSEHEPTETTPLRAGGDSRV) is disordered. The segment covering 618-631 (PNDEAEDSDGEDSE) has biased composition (acidic residues). The chain crosses the membrane as a helical span at residues 691 to 711 (FLLLAPINVILWGQIGLFAVA). Topologically, residues 712–724 (ATQAGGADGGSVL) are vacuolar. A helical membrane pass occupies residues 725-745 (TTYLIIAVLSIVILVPLAPFI). Over 746–750 (HRVHY) the chain is Cytoplasmic. Residues 751–771 (YVPIILFAAFAGTLIYNLIAF) form a helical membrane-spanning segment. Residues 772 to 1020 (PFSANNRYKI…VGLVRPVKRF (249 aa)) are Vacuolar-facing. Asn851, Asn868, and Asn873 each carry an N-linked (GlcNAc...) asparagine glycan.

This sequence belongs to the peptidase M28 family. It depends on Zn(2+) as a cofactor.

The protein localises to the vacuole membrane. Functionally, may be involved in vacuolar sorting and osmoregulation. In Verticillium alfalfae (strain VaMs.102 / ATCC MYA-4576 / FGSC 10136) (Verticillium wilt of alfalfa), this protein is Vacuolar membrane protease.